The primary structure comprises 260 residues: Snake venom serine protease homolog KN4 (260 aa).

Positions 1-18 (MVLIRVLANLLILQLSYA) are cleaved as a signal peptide. A propeptide spanning residues 19 to 24 (QKSSEL) is cleaved from the precursor. The 227-residue stretch at 25-251 (IIGGDECNIN…HLDWIQNIIA (227 aa)) folds into the Peptidase S1 domain. Disulfide bonds link Cys-31–Cys-165, Cys-52–Cys-68, Cys-100–Cys-258, Cys-144–Cys-212, Cys-176–Cys-191, and Cys-202–Cys-227. N-linked (GlcNAc...) asparagine glycans are attached at residues Asn-83, Asn-123, Asn-124, Asn-156, and Asn-172. Asn-253 carries N-linked (GlcNAc...) asparagine glycosylation.

The protein belongs to the peptidase S1 family. Snake venom subfamily. Expressed by the venom gland.

Its subcellular location is the secreted. Snake venom serine protease homolog that may act in the hemostasis system of the prey. This is Snake venom serine protease homolog KN4 from Trimeresurus stejnegeri (Chinese green tree viper).